Reading from the N-terminus, the 279-residue chain is Large ribosomal subunit protein uL2 (279 aa).

The interval 223–279 (VVMNPVDHPHGGGEGRTSGGRHPVTPWGKPTKGKRTRSNKKTDSLIMRSRHLAKKKR) is disordered. Basic residues predominate over residues 270–279 (RSRHLAKKKR).

Belongs to the universal ribosomal protein uL2 family. Part of the 50S ribosomal subunit. Forms a bridge to the 30S subunit in the 70S ribosome.

Its function is as follows. One of the primary rRNA binding proteins. Required for association of the 30S and 50S subunits to form the 70S ribosome, for tRNA binding and peptide bond formation. It has been suggested to have peptidyltransferase activity; this is somewhat controversial. Makes several contacts with the 16S rRNA in the 70S ribosome. In Rhodospirillum rubrum (strain ATCC 11170 / ATH 1.1.1 / DSM 467 / LMG 4362 / NCIMB 8255 / S1), this protein is Large ribosomal subunit protein uL2.